The primary structure comprises 62 residues: Photosystem II reaction center protein Z (62 aa).

Helical transmembrane passes span 8–28 (AVFALIAISFILLISVPVVFA) and 41–61 (FSGTSLWIGLVFLVGILNSLI).

This sequence belongs to the PsbZ family. As to quaternary structure, PSII is composed of 1 copy each of membrane proteins PsbA, PsbB, PsbC, PsbD, PsbE, PsbF, PsbH, PsbI, PsbJ, PsbK, PsbL, PsbM, PsbT, PsbY, PsbZ, Psb30/Ycf12, at least 3 peripheral proteins of the oxygen-evolving complex and a large number of cofactors. It forms dimeric complexes.

It is found in the plastid. It localises to the chloroplast thylakoid membrane. In terms of biological role, may control the interaction of photosystem II (PSII) cores with the light-harvesting antenna, regulates electron flow through the 2 photosystem reaction centers. PSII is a light-driven water plastoquinone oxidoreductase, using light energy to abstract electrons from H(2)O, generating a proton gradient subsequently used for ATP formation. The polypeptide is Photosystem II reaction center protein Z (Glycine max (Soybean)).